A 481-amino-acid chain; its full sequence is Phosphoglycerate kinase, chloroplastic (481 aa).

Residues 1-75 (MASATASHTL…SSKPIRGVAS (75 aa)) constitute a chloroplast transit peptide. Residues Ala98, Asp99, Asn101, Arg115, Ser137, His138, Gly140, Arg141, Arg196, His228, and Arg229 each contribute to the (2R)-3-phosphoglycerate site. Residue Gly274 participates in ADP binding. Gly274 contributes to the CDP binding site. AMP is bound by residues Lys276 and Lys280. An ATP-binding site is contributed by Lys280. Gly298 contributes to the ADP binding site. Gly298 contacts CDP. Positions 299 and 371 each coordinate AMP. Positions 299 and 371 each coordinate ATP. Residues Gly396 and Phe401 each coordinate CDP. Phe401 lines the ADP pocket. Glu402 serves as a coordination point for AMP. Residues Glu402, Asp433, and Ser434 each coordinate ATP. A Mg(2+)-binding site is contributed by Asp433.

It belongs to the phosphoglycerate kinase family. As to quaternary structure, monomer. It depends on Mg(2+) as a cofactor.

The protein localises to the plastid. Its subcellular location is the chloroplast. It catalyses the reaction (2R)-3-phosphoglycerate + ATP = (2R)-3-phospho-glyceroyl phosphate + ADP. Its pathway is carbohydrate biosynthesis; Calvin cycle. The protein is Phosphoglycerate kinase, chloroplastic of Nicotiana tabacum (Common tobacco).